A 352-amino-acid polypeptide reads, in one-letter code: UPF0324 membrane protein blr3189 (352 aa).

Helical transmembrane passes span Ile-21–Arg-43, Tyr-53–Trp-71, Leu-88–Ile-110, Ala-114–Leu-136, Leu-143–Ala-165, Ser-175–Leu-197, Ile-204–Val-226, Leu-236–Ala-253, Val-265–Leu-284, Val-294–Gly-316, and Val-329–Phe-351.

Belongs to the UPF0324 family.

The protein resides in the cell membrane. The sequence is that of UPF0324 membrane protein blr3189 from Bradyrhizobium diazoefficiens (strain JCM 10833 / BCRC 13528 / IAM 13628 / NBRC 14792 / USDA 110).